A 156-amino-acid chain; its full sequence is Transcriptional repressor NrdR (156 aa).

A zinc finger spans residues 3-34 (CPYCRHPDSRVVDSREAEEGAAIRRRRSCPNC). The ATP-cone domain occupies 46-136 (LSVVKRSGVT…VYRSFTSAED (91 aa)).

Belongs to the NrdR family. Zn(2+) serves as cofactor.

Functionally, negatively regulates transcription of bacterial ribonucleotide reductase nrd genes and operons by binding to NrdR-boxes. This Nocardia farcinica (strain IFM 10152) protein is Transcriptional repressor NrdR.